We begin with the raw amino-acid sequence, 778 residues long: Gelsolin (778 aa).

The N-terminal stretch at 1–23 (MGKQGFGYIFLTIFCTMALKLNC) is a signal peptide. An actin-severing region spans residues 49–172 (MVEHAEFSKA…YKAGGVASGF (124 aa)). Residues 72-154 (FDLVPVPKNL…VQGHESSTFL (83 aa)) form a Gelsolin-like 1 repeat. 6 residues coordinate Ca(2+): Gly88, Asp89, Glu120, Asp132, Gly137, and Ala139. The actin-actin interfilament contact point stretch occupies residues 119–122 (DERG). Residue 158 to 165 (KSGIKYKA) coordinates a 1,2-diacyl-sn-glycero-3-phospho-(1D-myo-inositol-4,5-bisphosphate). Val168 contacts Ca(2+). 184–192 (RLLQVKGRR) serves as a coordination point for a 1,2-diacyl-sn-glycero-3-phospho-(1D-myo-inositol-4,5-bisphosphate). One copy of the Gelsolin-like 2 repeat lies at 193–266 (TVRATEVPVS…SEEGAEREEM (74 aa)). Ca(2+) contacts are provided by Gly209 and Asp210. The cysteines at positions 211 and 224 are disulfide-linked. Residues Glu232, Asp282, Glu325, Asp326, Glu350, Gly467, Asp468, Glu498, Asp510, Gly515, Pro517, Thr547, Asn587, Asp588, Glu610, Asp692, Asp693, and Glu715 each contribute to the Ca(2+) site. Gelsolin-like repeat units follow at residues 313–385 (DENP…TPLF) and 451–532 (SEKV…PHLM). The interval 430 to 778 (AAQHGMEDDG…LQRAMADVDV (349 aa)) is actin-binding, Ca-sensitive. 2 Gelsolin-like repeats span residues 574–638 (AVEL…DNFW) and 677–752 (IEEV…PPTF).

This sequence belongs to the villin/gelsolin family. As to quaternary structure, binds to actin and to fibronectin. Highly expressed in homogene cells of the basilar papilla. Also detected in subcutaneous layer of the skin.

The protein localises to the secreted. The protein resides in the cytoplasm. Its subcellular location is the cytoskeleton. Its function is as follows. Calcium-regulated, actin-modulating protein that binds to the plus (or barbed) ends of actin monomers or filaments, preventing monomer exchange (end-blocking or capping). It can promote the assembly of monomers into filaments (nucleation) as well as sever filaments already formed. Plays a role in ciliogenesis. The chain is Gelsolin (GSN) from Gallus gallus (Chicken).